The chain runs to 100 residues: Large ribosomal subunit protein uL23 (100 aa).

This sequence belongs to the universal ribosomal protein uL23 family. In terms of assembly, part of the 50S ribosomal subunit. Contacts protein L29, and trigger factor when it is bound to the ribosome.

One of the early assembly proteins it binds 23S rRNA. One of the proteins that surrounds the polypeptide exit tunnel on the outside of the ribosome. Forms the main docking site for trigger factor binding to the ribosome. This Rippkaea orientalis (strain PCC 8801 / RF-1) (Cyanothece sp. (strain PCC 8801)) protein is Large ribosomal subunit protein uL23.